A 113-amino-acid polypeptide reads, in one-letter code: EVKLEESGGGLVQPGGSMKLSCVASGFTFSNYWMNWVRQSPEKGLEWVAEIRLKSHNYATHYAESVKGRFTISRDDSKSSVYLQMNNLRAEDTGIYYCTTGFAYWGQGTLVTV.

The Ig-like domain maps to 1–113 (EVKLEESGGG…YWGQGTLVTV (113 aa)). A disulfide bond links C22 and C98.

The sequence is that of Ig heavy chain V-III region A4 from Mus musculus (Mouse).